Reading from the N-terminus, the 343-residue chain is Phosphate acyltransferase (343 aa).

Belongs to the PlsX family. As to quaternary structure, homodimer. Probably interacts with PlsY.

It localises to the cytoplasm. The catalysed reaction is a fatty acyl-[ACP] + phosphate = an acyl phosphate + holo-[ACP]. It functions in the pathway lipid metabolism; phospholipid metabolism. Functionally, catalyzes the reversible formation of acyl-phosphate (acyl-PO(4)) from acyl-[acyl-carrier-protein] (acyl-ACP). This enzyme utilizes acyl-ACP as fatty acyl donor, but not acyl-CoA. This chain is Phosphate acyltransferase, found in Coxiella burnetii (strain CbuG_Q212) (Coxiella burnetii (strain Q212)).